The following is a 251-amino-acid chain: D-aminoacyl-tRNA deacylase (251 aa).

It belongs to the DtdA deacylase family. Monomer. Zn(2+) is required as a cofactor.

The enzyme catalyses a D-aminoacyl-tRNA + H2O = a tRNA + a D-alpha-amino acid + H(+). It catalyses the reaction glycyl-tRNA(Ala) + H2O = tRNA(Ala) + glycine + H(+). Its function is as follows. D-aminoacyl-tRNA deacylase with broad substrate specificity. By recycling D-aminoacyl-tRNA to D-amino acids and free tRNA molecules, this enzyme counteracts the toxicity associated with the formation of D-aminoacyl-tRNA entities in vivo. This chain is D-aminoacyl-tRNA deacylase, found in Pyrobaculum aerophilum (strain ATCC 51768 / DSM 7523 / JCM 9630 / CIP 104966 / NBRC 100827 / IM2).